Reading from the N-terminus, the 327-residue chain is Voltage-dependent calcium channel gamma-4 subunit (327 aa).

The Cytoplasmic portion of the chain corresponds to 1 to 9 (MVRCDRGLQ). A helical membrane pass occupies residues 10–30 (MLLTTAGAFAAFSLMAIAIGT). Residues 31-107 (DYWLYSSAHI…EYLLRIVRAS (77 aa)) lie on the Extracellular side of the membrane. 2 N-linked (GlcNAc...) asparagine glycosylation sites follow: N42 and N45. A helical transmembrane segment spans residues 108–128 (SVFPILSTILLLLGGLCIGAG). The Cytoplasmic segment spans residues 129–136 (RIYSRKNN). Residues 137-157 (IVLSAGILFVAAGLSNIIGII) form a helical membrane-spanning segment. The Extracellular segment spans residues 158–186 (VYISSNTGDPSDKRDEDKKNHYNYGWSFY). A helical transmembrane segment spans residues 187 to 207 (FGALSFIVAETVGVLAVNIYI). Residues 208 to 327 (EKNKELRFKT…SMLNRRTTPV (120 aa)) lie on the Cytoplasmic side of the membrane. A disordered region spans residues 235–261 (SYRYRRRRSRSSSRSTEASPSRDVSPM). The span at 246–256 (SSRSTEASPSR) shows a compositional bias: low complexity. S259 is subject to Phosphoserine.

The protein belongs to the PMP-22/EMP/MP20 family. CACNG subfamily. Interacts with CACNA1C. Identified in a complex with the L-type calcium channel subunits CACNA1C, CACNA2D1 and either CACNB1 or CACNB2. Acts as an auxiliary subunit for AMPA-selective glutamate receptors (AMPARs). Interacts with GRIA1. Detected in heart left ventricle.

The protein localises to the cell membrane. In terms of biological role, regulates the activity of L-type calcium channels that contain CACNA1C as pore-forming subunit. Regulates the trafficking and gating properties of AMPA-selective glutamate receptors (AMPARs), including GRIA1 and GRIA4. Promotes their targeting to the cell membrane and synapses and modulates their gating properties by slowing their rates of activation, deactivation and desensitization and by mediating their resensitization. The sequence is that of Voltage-dependent calcium channel gamma-4 subunit (CACNG4) from Homo sapiens (Human).